A 212-amino-acid chain; its full sequence is SOSS complex subunit B1 (212 aa).

The OB DNA-binding region spans 22-92 (IVLETGRVTK…TLYTGRGGDL (71 aa)). The tract at residues 110–212 (EPNPEYNTQQ…GKETRRSSKR (103 aa)) is disordered. The span at 114-130 (EYNTQQAPNKSVQNNDN) shows a compositional bias: polar residues. Thr117 bears the Phosphothreonine; by ATM mark. A compositionally biased stretch (low complexity) spans 131–148 (SPTAPQATTGPPAASPAS). Residues 149-160 (ENQNGNGLSTQL) are compositionally biased toward polar residues. Low complexity predominate over residues 166 to 178 (PHPSHTPSHPPST).

It belongs to the SOSS-B family. SOSS-B1 subfamily. Component of the SOSS complex, composed of SOSS-B (SOSS-B1/NABP2 or SOSS-B2/NABP1), SOSS-A/INTS3 and SOSS-C/INIP. SOSS complexes containing SOSS-B1/NABP2 are more abundant than complexes containing SOSS-B2/NABP1. Directly interacts with ATM, SOSS-A/INTS3 and RAD51. Interacts with INTS7. Post-translationally, phosphorylated by ATM in response to DNA damage. Phosphorylation prevents degradation by the proteasome, hence stabilization of the protein and accumulation within cells. In terms of processing, ubiquitinated in a FBXL5-dependent manner, leading to proteasomal degradation.

It is found in the nucleus. In terms of biological role, component of the SOSS complex, a multiprotein complex that functions downstream of the MRN complex to promote DNA repair and G2/M checkpoint. In the SOSS complex, acts as a sensor of single-stranded DNA that binds to single-stranded DNA, in particular to polypyrimidines. The SOSS complex associates with DNA lesions and influences diverse endpoints in the cellular DNA damage response including cell-cycle checkpoint activation, recombinational repair and maintenance of genomic stability. Required for efficient homologous recombination-dependent repair of double-strand breaks (DSBs) and ATM-dependent signaling pathways. In Mus musculus (Mouse), this protein is SOSS complex subunit B1 (Nabp2).